Consider the following 831-residue polypeptide: von Willebrand factor A domain-containing protein DDB_G0285981 (831 aa).

Residues 60 to 188 form the VIT domain; that stretch reads RDTFGLKTFS…NVTIHLTIIS (129 aa). One can recognise a VWFA domain in the interval 312–480; sequence EFIFLIDCSG…NFEEQVMKLV (169 aa).

This is von Willebrand factor A domain-containing protein DDB_G0285981 from Dictyostelium discoideum (Social amoeba).